Consider the following 315-residue polypeptide: Methionyl-tRNA formyltransferase (315 aa).

113–116 (SLLP) contacts (6S)-5,6,7,8-tetrahydrofolate.

Belongs to the Fmt family.

The enzyme catalyses L-methionyl-tRNA(fMet) + (6R)-10-formyltetrahydrofolate = N-formyl-L-methionyl-tRNA(fMet) + (6S)-5,6,7,8-tetrahydrofolate + H(+). Functionally, attaches a formyl group to the free amino group of methionyl-tRNA(fMet). The formyl group appears to play a dual role in the initiator identity of N-formylmethionyl-tRNA by promoting its recognition by IF2 and preventing the misappropriation of this tRNA by the elongation apparatus. In Shigella boydii serotype 18 (strain CDC 3083-94 / BS512), this protein is Methionyl-tRNA formyltransferase.